The primary structure comprises 161 residues: MSVVTKSIVNADAEARYLSPGELDRIKNFVSTGERRLRIAQTLTENRERIVKQAGDQLFQKRPDVVSPGGNAYGEEMTATCLRDLDYYLRLVTYGIVAGDVTPIEEIGLVGVREMYNSLGTPIPAVAEGIRAMKNVACSLLSAEDAAEAGSYFDFVIGAMQ.

N71 carries the N4-methylasparagine modification. C81 contacts (2R,3E)-phycocyanobilin.

This sequence belongs to the phycobiliprotein family. Heterodimer of an alpha and a beta chain. Post-translationally, contains one covalently linked phycocyanobilin chromophore.

Its subcellular location is the cellular thylakoid membrane. Light-harvesting photosynthetic bile pigment-protein from the phycobiliprotein complex. Allophycocyanin has a maximum absorption at approximately 650 nanometers. The polypeptide is Allophycocyanin alpha chain (apcA) (Thermosynechococcus vestitus (strain NIES-2133 / IAM M-273 / BP-1)).